The sequence spans 50 residues: Cytochrome c-555 (50 aa).

Residues cysteine 7, cysteine 10, histidine 11, and methionine 25 each coordinate heme.

Post-translationally, binds 1 heme group per subunit.

The protein resides in the cell membrane. The chain is Cytochrome c-555 from Schinkia azotoformans (Bacillus azotoformans).